The following is a 463-amino-acid chain: Glycine--tRNA ligase (463 aa).

Substrate-binding residues include Arg-100 and Glu-175. ATP contacts are provided by residues 207-209, 217-222, 291-292, and 335-338; these read RNE, FRTREF, EL, and GADR. Residue 222–226 coordinates substrate; sequence FEQME. 331-335 is a substrate binding site; that stretch reads EPSVG.

The protein belongs to the class-II aminoacyl-tRNA synthetase family. As to quaternary structure, homodimer.

It is found in the cytoplasm. The enzyme catalyses tRNA(Gly) + glycine + ATP = glycyl-tRNA(Gly) + AMP + diphosphate. Catalyzes the attachment of glycine to tRNA(Gly). The chain is Glycine--tRNA ligase from Clostridium kluyveri (strain NBRC 12016).